A 116-amino-acid chain; its full sequence is Ribonuclease T (116 aa).

In terms of domain architecture, Exonuclease spans 18–99; it reads KRAILVGHNS…YDTEKTAELF (82 aa). Histidine 86 (proton donor/acceptor) is an active-site residue.

This sequence belongs to the RNase T family. As to quaternary structure, homodimer.

Its function is as follows. Trims short 3' overhangs of a variety of RNA species, leaving a one or two nucleotide 3' overhang. Responsible for the end-turnover of tRNA: specifically removes the terminal AMP residue from uncharged tRNA (tRNA-C-C-A). Also appears to be involved in tRNA biosynthesis. This is Ribonuclease T from Azotobacter vinelandii.